A 308-amino-acid polypeptide reads, in one-letter code: Acetaldehyde dehydrogenase (308 aa).

Residue 25 to 28 (TGAI) participates in NAD(+) binding. Cysteine 139 serves as the catalytic Acyl-thioester intermediate. Asparagine 279 contacts NAD(+).

This sequence belongs to the acetaldehyde dehydrogenase family.

It carries out the reaction acetaldehyde + NAD(+) + CoA = acetyl-CoA + NADH + H(+). This is Acetaldehyde dehydrogenase from Streptomyces griseus subsp. griseus (strain JCM 4626 / CBS 651.72 / NBRC 13350 / KCC S-0626 / ISP 5235).